The following is a 298-amino-acid chain: Acetylglutamate kinase (298 aa).

Substrate is bound by residues 73 to 74 (GG), R95, and N188.

It belongs to the acetylglutamate kinase family. ArgB subfamily.

It is found in the cytoplasm. The enzyme catalyses N-acetyl-L-glutamate + ATP = N-acetyl-L-glutamyl 5-phosphate + ADP. The protein operates within amino-acid biosynthesis; L-arginine biosynthesis; N(2)-acetyl-L-ornithine from L-glutamate: step 2/4. Its function is as follows. Catalyzes the ATP-dependent phosphorylation of N-acetyl-L-glutamate. The polypeptide is Acetylglutamate kinase (Nostoc punctiforme (strain ATCC 29133 / PCC 73102)).